We begin with the raw amino-acid sequence, 269 residues long: Transmembrane protein 41B (269 aa).

6 helical membrane-spanning segments follow: residues 30 to 50 (TSLLILVSIFTIAAFLMFLVY), 87 to 107 (FYVQVLVAYFATYVFLQTFAI), 125 to 147 (LALFLVCLCSGLGASFCYMLSYL), 175 to 195 (LINYIIFLRITPFLPNWFINI), 203 to 223 (PLKVFFIGTFLGVAPPSFVAI), and 240 to 260 (SWNSLFVLMILAILSILPALF). The interval 118–229 (GFLYPFPLAL…FVAIKAGTTL (112 aa)) is VTT domain; required for its function in autophagy.

This sequence belongs to the TMEM41 family.

Its subcellular location is the endoplasmic reticulum membrane. It localises to the endomembrane system. It carries out the reaction a 1,2-diacyl-sn-glycero-3-phospho-L-serine(in) = a 1,2-diacyl-sn-glycero-3-phospho-L-serine(out). The enzyme catalyses cholesterol(in) = cholesterol(out). It catalyses the reaction a 1,2-diacyl-sn-glycero-3-phosphocholine(in) = a 1,2-diacyl-sn-glycero-3-phosphocholine(out). The catalysed reaction is a 1,2-diacyl-sn-glycero-3-phosphoethanolamine(in) = a 1,2-diacyl-sn-glycero-3-phosphoethanolamine(out). In terms of biological role, phospholipid scramblase involved in lipid homeostasis and membrane dynamics processes. Has phospholipid scramblase activity toward cholesterol and phosphatidylserine, as well as phosphatidylethanolamine and phosphatidylcholine. Required for autophagosome formation: participates in early stages of autophagosome biogenesis at the endoplasmic reticulum (ER) membrane by reequilibrating the leaflets of the ER as lipids are extracted by ATG2 (ATG2A or ATG2B) to mediate autophagosome assembly. In addition to autophagy, involved in other processes in which phospholipid scramblase activity is required. Required for normal motor neuron development. This is Transmembrane protein 41B from Gallus gallus (Chicken).